The sequence spans 529 residues: MGPSCPVFLSFTKLSLWWLLLTPAGGEEAKRPPPRAPGDPLSSPSPTALPQGGSHTETEDRLFKHLFRGYNRWARPVPNTSDVVIVRFGLSIAQLIDVDEKNQMMTTNVWLKQEWSDYKLRWNPTDFGNITSLRVPSEMIWIPDIVLYNNADGEFAVTHMTKAHLFSTGTVHWVPPAIYKSSCSIDVTFFPFDQQNCKMKFGSWTYDKAKIDLEQMEQTVDLKDYWESGEWAIVNATGTYNSKKYDCCAEIYPDVTYAFVIRRLPLFYTINLIIPCLLISCLTVLVFYLPSDCGEKITLCISVLLSLTVFLLLITEIIPSTSLVIPLIGEYLLFTMIFVTLSIVITVFVLNVHHRSPSTHTMPHWVRGALLGCVPRWLLMNRPPPPVELCHPLRLKLSPSYHWLESNVDAEEREVVVEEEDRWACAGHVAPSVGTLCSHGHLHSGASGPKAEALLQEGELLLSPHMQKALEGVHYIADHLRSEDADSSVKEDWKYVAMVIDRIFLWLFIIVCFLGTIGLFLPPFLAGMI.

The N-terminal stretch at 1-26 is a signal peptide; sequence MGPSCPVFLSFTKLSLWWLLLTPAGG. The interval 27–56 is disordered; that stretch reads EEAKRPPPRAPGDPLSSPSPTALPQGGSHT. At 27–264 the chain is on the extracellular side; it reads EEAKRPPPRA…VTYAFVIRRL (238 aa). 2 N-linked (GlcNAc...) asparagine glycosylation sites follow: Asn79 and Asn129. Cysteines 183 and 197 form a disulfide. The N-linked (GlcNAc...) asparagine glycan is linked to Asn235. Cys247 and Cys248 form a disulfide bridge. Helical transmembrane passes span 265-289, 297-315, and 331-352; these read PLFY…VFYL, ITLC…LLIT, and YLLF…VLNV. Residues 353-502 are Cytoplasmic-facing; sequence HHRSPSTHTM…WKYVAMVIDR (150 aa). A helical transmembrane segment spans residues 503–521; it reads IFLWLFIIVCFLGTIGLFL.

The protein belongs to the ligand-gated ion channel (TC 1.A.9) family. Acetylcholine receptor (TC 1.A.9.1) subfamily. Alpha-2/CHRNA2 sub-subfamily. In terms of assembly, neuronal AChR is composed of two different types of subunits: alpha and non-alpha (beta). CHRNA2/alpha-2 subunit can be combined to CHRNB2/beta-2 or CHRNB4/beta-4 to give rise to functional receptors. Both CHRNA2:CHRNB2 and CHRNA2:CHRNB4 nAChR complexes are heteropentamers with two subtypes: LS (low agonist sensitivity) with a (CHRNA2)3:(CHRNB2/4)2 and HS (high agonist sensitivity) with a (CHRNA2)2:(CHRNB2/4)3 stoichiometries; the subtypes differ in their subunit binding interfaces which are involved in ligand binding.

Its subcellular location is the synaptic cell membrane. It localises to the cell membrane. It carries out the reaction Ca(2+)(in) = Ca(2+)(out). The catalysed reaction is K(+)(in) = K(+)(out). It catalyses the reaction Na(+)(in) = Na(+)(out). Functionally, component of neuronal acetylcholine receptors (nAChRs) that function as pentameric, ligand-gated cation channels with high calcium permeability among other activities. nAChRs are excitatory neurotrasnmitter receptors formed by a collection of nAChR subunits known to mediate synaptic transmission in the nervous system and the neuromuscular junction. Each nAchR subunit confers differential attributes to channel properties, including activation, deactivation and desensitization kinetics, pH sensitivity, cation permeability, and binding to allosteric modulators. CHRNA2 forms heteropentameric neuronal acetylcholine receptors with CHRNB2 and CHRNB4 and plays a role in nicotine dependence. The chain is Neuronal acetylcholine receptor subunit alpha-2 from Homo sapiens (Human).